We begin with the raw amino-acid sequence, 895 residues long: Probable inorganic carbon transporter subunit DabA 1 (895 aa).

Zn(2+) is bound by residues Cys-398, Asp-400, His-581, and Cys-596.

Belongs to the inorganic carbon transporter (TC 9.A.2) DabA family. As to quaternary structure, forms a complex with DabB. The cofactor is Zn(2+).

The protein localises to the cell inner membrane. Part of an energy-coupled inorganic carbon pump. The polypeptide is Probable inorganic carbon transporter subunit DabA 1 (Rhodopirellula baltica (strain DSM 10527 / NCIMB 13988 / SH1)).